The chain runs to 339 residues: Ketol-acid reductoisomerase (NADP(+)) (339 aa).

The region spanning 1–182 (MRVYYDRDAD…GGGRSGIIET (182 aa)) is the KARI N-terminal Rossmann domain. NADP(+) is bound by residues 24–27 (YGSQ), Arg-48, Ser-51, Thr-53, and 83–86 (DELQ). The active site involves His-108. Gly-134 is a binding site for NADP(+). Residues 183–328 (SFREECETDL…EKLRAMMPWI (146 aa)) enclose the KARI C-terminal knotted domain. Residues Asp-191, Glu-195, Glu-227, and Glu-231 each coordinate Mg(2+). Ser-252 lines the substrate pocket.

It belongs to the ketol-acid reductoisomerase family. Requires Mg(2+) as cofactor.

The catalysed reaction is (2R)-2,3-dihydroxy-3-methylbutanoate + NADP(+) = (2S)-2-acetolactate + NADPH + H(+). It catalyses the reaction (2R,3R)-2,3-dihydroxy-3-methylpentanoate + NADP(+) = (S)-2-ethyl-2-hydroxy-3-oxobutanoate + NADPH + H(+). It functions in the pathway amino-acid biosynthesis; L-isoleucine biosynthesis; L-isoleucine from 2-oxobutanoate: step 2/4. It participates in amino-acid biosynthesis; L-valine biosynthesis; L-valine from pyruvate: step 2/4. Its function is as follows. Involved in the biosynthesis of branched-chain amino acids (BCAA). Catalyzes an alkyl-migration followed by a ketol-acid reduction of (S)-2-acetolactate (S2AL) to yield (R)-2,3-dihydroxy-isovalerate. In the isomerase reaction, S2AL is rearranged via a Mg-dependent methyl migration to produce 3-hydroxy-3-methyl-2-ketobutyrate (HMKB). In the reductase reaction, this 2-ketoacid undergoes a metal-dependent reduction by NADPH to yield (R)-2,3-dihydroxy-isovalerate. This chain is Ketol-acid reductoisomerase (NADP(+)), found in Paramagnetospirillum magneticum (strain ATCC 700264 / AMB-1) (Magnetospirillum magneticum).